We begin with the raw amino-acid sequence, 306 residues long: NAD-dependent protein deacylase (306 aa).

Residues 1 to 305 (MNKQLKEFQE…PIALKPLIGD (305 aa)) enclose the Deacetylase sirtuin-type domain. An NAD(+)-binding site is contributed by 23 to 42 (GAGLSASSGLPTFRGSQGLW). Residues tyrosine 67 and arginine 70 each coordinate substrate. 103 to 106 (QNVD) provides a ligand contact to NAD(+). Histidine 123 functions as the Proton acceptor in the catalytic mechanism. Cysteine 131, cysteine 136, cysteine 200, and cysteine 203 together coordinate Zn(2+). NAD(+) is bound by residues 243–245 (GTS), 269–271 (NTD), and alanine 291.

It belongs to the sirtuin family. Class III subfamily. The cofactor is Zn(2+).

It is found in the mitochondrion. The catalysed reaction is N(6)-malonyl-L-lysyl-[protein] + NAD(+) + H2O = 2''-O-malonyl-ADP-D-ribose + nicotinamide + L-lysyl-[protein]. It catalyses the reaction N(6)-succinyl-L-lysyl-[protein] + NAD(+) + H2O = 2''-O-succinyl-ADP-D-ribose + nicotinamide + L-lysyl-[protein]. The enzyme catalyses N(6)-glutaryl-L-lysyl-[protein] + NAD(+) + H2O = 2''-O-glutaryl-ADP-D-ribose + nicotinamide + L-lysyl-[protein]. In terms of biological role, NAD-dependent lysine demalonylase, desuccinylase and deglutarylase that specifically removes malonyl, succinyl and glutaryl groups on target proteins. Has weak NAD-dependent protein deacetylase activity; however this activity may not be physiologically relevant in vivo. This chain is NAD-dependent protein deacylase, found in Candida albicans (strain SC5314 / ATCC MYA-2876) (Yeast).